A 158-amino-acid polypeptide reads, in one-letter code: C-type lectin mannose-binding isoform (158 aa).

Positions 1-20 (MGRFLLVTLSMLVVTFSLNE) are cleaved as a signal peptide. Cystine bridges form between cysteine 26-cysteine 37, cysteine 54-cysteine 154, and cysteine 129-cysteine 146. The C-type lectin domain occupies 33-155 (KNGFCYKVFN…CEALYHFICQ (123 aa)). Positions 119–121 (EPN) match the Mannose-binding motif. Residue asparagine 121 is glycosylated (N-linked (GlcNAc...) asparagine). Ca(2+)-binding residues include glutamate 127, asparagine 142, and aspartate 143.

This sequence belongs to the true venom lectin family. In terms of assembly, homodimer; disulfide-linked. In terms of tissue distribution, expressed by the venom gland.

The protein resides in the secreted. In terms of biological role, mannose-binding lectin that binds to and agglutinates erythrocytes in a calcium-dependent manner. This Notechis scutatus scutatus (Mainland tiger snake) protein is C-type lectin mannose-binding isoform.